The chain runs to 341 residues: Tetraacyldisaccharide 4'-kinase (341 aa).

54-61 serves as a coordination point for ATP; that stretch reads TVGGAGKT.

Belongs to the LpxK family.

It catalyses the reaction a lipid A disaccharide + ATP = a lipid IVA + ADP + H(+). The protein operates within glycolipid biosynthesis; lipid IV(A) biosynthesis; lipid IV(A) from (3R)-3-hydroxytetradecanoyl-[acyl-carrier-protein] and UDP-N-acetyl-alpha-D-glucosamine: step 6/6. In terms of biological role, transfers the gamma-phosphate of ATP to the 4'-position of a tetraacyldisaccharide 1-phosphate intermediate (termed DS-1-P) to form tetraacyldisaccharide 1,4'-bis-phosphate (lipid IVA). This chain is Tetraacyldisaccharide 4'-kinase, found in Brucella melitensis biotype 1 (strain ATCC 23456 / CCUG 17765 / NCTC 10094 / 16M).